The following is a 129-amino-acid chain: Trefoil factor 2 (129 aa).

A signal peptide spans 1-23 (MGPRGAPLLAVVLVLGLHALVEG). 2 consecutive P-type domains span residues 29 to 73 (CRCS…FHPL) and 79 to 122 (EQCV…FFPQ). 7 disulfide bridges follow: C29-C127, C31-C58, C42-C57, C52-C69, C81-C107, C91-C106, and C101-C118.

In terms of tissue distribution, stomach and pancreas.

The protein resides in the secreted. In terms of biological role, inhibits gastrointestinal motility and gastric acid secretion. Could function as a structural component of gastric mucus, possibly by stabilizing glycoproteins in the mucus gel through interactions with carbohydrate side chains. The polypeptide is Trefoil factor 2 (Tff2) (Mus musculus (Mouse)).